The chain runs to 205 residues: Large ribosomal subunit protein uL4 (205 aa).

Residues 43-78 are disordered; sequence ARAGTKAQKTRSEVAGGGKKPWRQKGTGNARAGTIR.

The protein belongs to the universal ribosomal protein uL4 family. Part of the 50S ribosomal subunit.

In terms of biological role, one of the primary rRNA binding proteins, this protein initially binds near the 5'-end of the 23S rRNA. It is important during the early stages of 50S assembly. It makes multiple contacts with different domains of the 23S rRNA in the assembled 50S subunit and ribosome. Its function is as follows. Forms part of the polypeptide exit tunnel. The polypeptide is Large ribosomal subunit protein uL4 (Halorhodospira halophila (strain DSM 244 / SL1) (Ectothiorhodospira halophila (strain DSM 244 / SL1))).